Here is a 312-residue protein sequence, read N- to C-terminus: Acetaldehyde dehydrogenase (312 aa).

12-15 lines the NAD(+) pocket; sequence SGNI. Cys132 (acyl-thioester intermediate) is an active-site residue. NAD(+) is bound by residues 163–171 and Asn290; that span reads SAGPGTRAN.

This sequence belongs to the acetaldehyde dehydrogenase family. Heterotetramer composed of two DmpG (aldolase) and two DmpF (dehydrogenase) subunits, which allows a direct channeling of acetaldehyde between the two active sites.

It carries out the reaction acetaldehyde + NAD(+) + CoA = acetyl-CoA + NADH + H(+). Its pathway is aromatic compound metabolism; phenol degradation. With respect to regulation, is not activated by Mn(2+), Mg(2+), Ca(2+), Zn(2+) or Co(2+). In terms of biological role, catalyzes the conversion of acetaldehyde to acetyl-CoA, using NAD(+) and coenzyme A. Can also act on propanal and butanal to form propanoyl-CoA and butanoyl-CoA, respectively. Is the final enzyme in the meta-cleavage pathway for the degradation of aromatic compounds such as phenols, cresols and catechols. NADP(+) can replace NAD(+) but the rate of reaction is much slower. This Pseudomonas sp. (strain CF600) protein is Acetaldehyde dehydrogenase (dmpF).